We begin with the raw amino-acid sequence, 511 residues long: Maturase K (511 aa).

The protein belongs to the intron maturase 2 family. MatK subfamily.

It localises to the plastid. Its subcellular location is the chloroplast. Usually encoded in the trnK tRNA gene intron. Probably assists in splicing its own and other chloroplast group II introns. The polypeptide is Maturase K (Anchomanes difformis (Amorphophallus difformis)).